A 322-amino-acid polypeptide reads, in one-letter code: Ribosomal lysine N-methyltransferase 5 (322 aa).

Residues W92, 141-143, D163, W214, and M242 contribute to the S-adenosyl-L-methionine site; that span reads GTG.

The protein belongs to the class I-like SAM-binding methyltransferase superfamily. RKM5 family.

S-adenosyl-L-methionine-dependent protein-lysine N-methyltransferase that methylates 60S ribosomal protein L1. This Kluyveromyces lactis (strain ATCC 8585 / CBS 2359 / DSM 70799 / NBRC 1267 / NRRL Y-1140 / WM37) (Yeast) protein is Ribosomal lysine N-methyltransferase 5 (RKM5).